A 208-amino-acid chain; its full sequence is Probable nicotinate-nucleotide adenylyltransferase (208 aa).

The protein belongs to the NadD family.

It catalyses the reaction nicotinate beta-D-ribonucleotide + ATP + H(+) = deamido-NAD(+) + diphosphate. It participates in cofactor biosynthesis; NAD(+) biosynthesis; deamido-NAD(+) from nicotinate D-ribonucleotide: step 1/1. Catalyzes the reversible adenylation of nicotinate mononucleotide (NaMN) to nicotinic acid adenine dinucleotide (NaAD). In Trichormus variabilis (strain ATCC 29413 / PCC 7937) (Anabaena variabilis), this protein is Probable nicotinate-nucleotide adenylyltransferase.